The sequence spans 379 residues: Cytochrome b (379 aa).

4 consecutive transmembrane segments (helical) span residues 34–54 (FGSLLGICLITQILTGLLLAM), 78–99 (WLIRNLHANGASFFFICIYLHI), 114–134 (WNTGVILLLTLMATAFVGYVL), and 179–199 (FFALHFLLPFLIAGITLIHLT). Residues His-84 and His-98 each contribute to the heme b site. The heme b site is built by His-183 and His-197. Position 202 (His-202) interacts with a ubiquinone. The next 4 helical transmembrane spans lie at 227 to 247 (LKDILGFTLMFIPLLILAFFS), 289 to 309 (LGGVLALAASVLILFLIPFLH), 321 to 341 (LSQVLFWFLVANLLILTWIGS), and 348 to 368 (FIIIGQMASFTYFLILLILFP).

It belongs to the cytochrome b family. In terms of assembly, the cytochrome bc1 complex contains 11 subunits: 3 respiratory subunits (MT-CYB, CYC1 and UQCRFS1), 2 core proteins (UQCRC1 and UQCRC2) and 6 low-molecular weight proteins (UQCRH/QCR6, UQCRB/QCR7, UQCRQ/QCR8, UQCR10/QCR9, UQCR11/QCR10 and a cleavage product of UQCRFS1). This cytochrome bc1 complex then forms a dimer. The cofactor is heme b.

It is found in the mitochondrion inner membrane. Functionally, component of the ubiquinol-cytochrome c reductase complex (complex III or cytochrome b-c1 complex) that is part of the mitochondrial respiratory chain. The b-c1 complex mediates electron transfer from ubiquinol to cytochrome c. Contributes to the generation of a proton gradient across the mitochondrial membrane that is then used for ATP synthesis. The sequence is that of Cytochrome b (MT-CYB) from Casuarius bennetti (Dwarf cassowary).